We begin with the raw amino-acid sequence, 273 residues long: Ribosomal RNA small subunit methyltransferase A (273 aa).

Residues Asn18, Leu20, Gly45, Glu66, Asp91, and Asn113 each coordinate S-adenosyl-L-methionine.

The protein belongs to the class I-like SAM-binding methyltransferase superfamily. rRNA adenine N(6)-methyltransferase family. RsmA subfamily.

Its subcellular location is the cytoplasm. The enzyme catalyses adenosine(1518)/adenosine(1519) in 16S rRNA + 4 S-adenosyl-L-methionine = N(6)-dimethyladenosine(1518)/N(6)-dimethyladenosine(1519) in 16S rRNA + 4 S-adenosyl-L-homocysteine + 4 H(+). Its function is as follows. Specifically dimethylates two adjacent adenosines (A1518 and A1519) in the loop of a conserved hairpin near the 3'-end of 16S rRNA in the 30S particle. May play a critical role in biogenesis of 30S subunits. The polypeptide is Ribosomal RNA small subunit methyltransferase A (Shigella flexneri).